The following is a 78-amino-acid chain: D-alanyl carrier protein (78 aa).

Residues Met1–Lys78 form the Carrier domain. Ser36 is modified (O-(pantetheine 4'-phosphoryl)serine).

It belongs to the DltC family. In terms of processing, 4'-phosphopantetheine is transferred from CoA to a specific serine of apo-DCP.

It is found in the cytoplasm. The protein operates within cell wall biogenesis; lipoteichoic acid biosynthesis. Functionally, carrier protein involved in the D-alanylation of lipoteichoic acid (LTA). The loading of thioester-linked D-alanine onto DltC is catalyzed by D-alanine--D-alanyl carrier protein ligase DltA. The DltC-carried D-alanyl group is further transferred to cell membrane phosphatidylglycerol (PG) by forming an ester bond, probably catalyzed by DltD. D-alanylation of LTA plays an important role in modulating the properties of the cell wall in Gram-positive bacteria, influencing the net charge of the cell wall. The sequence is that of D-alanyl carrier protein from Bacillus pumilus (strain SAFR-032).